Reading from the N-terminus, the 72-residue chain is MSKVCVLTGKRPKYGNNVSHANNHTRTRFEPNLHTKRIWIEEERRWVKVRLTAKAMKIMSKTGTAELAKLLK.

This sequence belongs to the bacterial ribosomal protein bL28 family.

The protein is Large ribosomal subunit protein bL28 of Chlorobaculum tepidum (strain ATCC 49652 / DSM 12025 / NBRC 103806 / TLS) (Chlorobium tepidum).